A 100-amino-acid chain; its full sequence is Integration host factor subunit alpha (100 aa).

The protein belongs to the bacterial histone-like protein family. As to quaternary structure, heterodimer of an alpha and a beta chain.

Functionally, this protein is one of the two subunits of integration host factor, a specific DNA-binding protein that functions in genetic recombination as well as in transcriptional and translational control. This Phenylobacterium zucineum (strain HLK1) protein is Integration host factor subunit alpha.